The chain runs to 178 residues: Heavy metal-associated isoprenylated plant protein 30 (178 aa).

In terms of domain architecture, HMA spans 45 to 108; it reads LQTIDLKVRM…AVRRAGKRAE (64 aa). A metal cation-binding residues include Cys56 and Cys59. Cys175 is subject to Cysteine methyl ester. The S-farnesyl cysteine moiety is linked to residue Cys175. Residues 176-178 constitute a propeptide, removed in mature form; the sequence is SLM.

The protein belongs to the HIPP family. Interacts with ZHD3/HB21, ZHD11/HB29 and ZHD8/HB30.

In terms of biological role, heavy-metal-binding protein. This chain is Heavy metal-associated isoprenylated plant protein 30, found in Arabidopsis thaliana (Mouse-ear cress).